The chain runs to 283 residues: Shikimate kinase (283 aa).

Position 86–96 (86–96 (PLKSGLSSSSA)) interacts with ATP.

Belongs to the GHMP kinase family. Archaeal shikimate kinase subfamily.

It localises to the cytoplasm. The enzyme catalyses shikimate + ATP = 3-phosphoshikimate + ADP + H(+). Its pathway is metabolic intermediate biosynthesis; chorismate biosynthesis; chorismate from D-erythrose 4-phosphate and phosphoenolpyruvate: step 5/7. This Methanococcus vannielii (strain ATCC 35089 / DSM 1224 / JCM 13029 / OCM 148 / SB) protein is Shikimate kinase.